The sequence spans 321 residues: tRNA-dihydrouridine synthase B (321 aa).

Residues 16-18 (PMA) and Gln-70 each bind FMN. Cys-100 serves as the catalytic Proton donor. Residues Lys-139, 200–202 (NGD), and 224–225 (GR) each bind FMN.

It belongs to the Dus family. DusB subfamily. FMN serves as cofactor.

The catalysed reaction is a 5,6-dihydrouridine in tRNA + NAD(+) = a uridine in tRNA + NADH + H(+). It catalyses the reaction a 5,6-dihydrouridine in tRNA + NADP(+) = a uridine in tRNA + NADPH + H(+). Functionally, catalyzes the synthesis of 5,6-dihydrouridine (D), a modified base found in the D-loop of most tRNAs, via the reduction of the C5-C6 double bond in target uridines. The protein is tRNA-dihydrouridine synthase B of Klebsiella pneumoniae.